Consider the following 97-residue polypeptide: HssA/B-like protein 44 (97 aa).

Disordered regions lie at residues Met-1–Ala-22 and Ala-62–Asn-97. Over residues Arg-72–Gly-84 the composition is skewed to basic residues. The span at Arg-85 to Asn-97 shows a compositional bias: gly residues.

The protein belongs to the hssA/B family.

The chain is HssA/B-like protein 44 (hssl44) from Dictyostelium discoideum (Social amoeba).